Reading from the N-terminus, the 411-residue chain is Multifunctional CCA protein (411 aa).

Residues glycine 8 and arginine 11 each contribute to the ATP site. CTP-binding residues include glycine 8 and arginine 11. 2 residues coordinate Mg(2+): aspartate 21 and aspartate 23. Positions 91, 137, and 140 each coordinate ATP. CTP-binding residues include arginine 91, arginine 137, and arginine 140. One can recognise an HD domain in the interval 228-329 (CGIHTLMVAK…VNILDQIDSW (102 aa)).

The protein belongs to the tRNA nucleotidyltransferase/poly(A) polymerase family. Bacterial CCA-adding enzyme type 1 subfamily. As to quaternary structure, monomer. Can also form homodimers and oligomers. The cofactor is Mg(2+). It depends on Ni(2+) as a cofactor.

The catalysed reaction is a tRNA precursor + 2 CTP + ATP = a tRNA with a 3' CCA end + 3 diphosphate. The enzyme catalyses a tRNA with a 3' CCA end + 2 CTP + ATP = a tRNA with a 3' CCACCA end + 3 diphosphate. In terms of biological role, catalyzes the addition and repair of the essential 3'-terminal CCA sequence in tRNAs without using a nucleic acid template. Adds these three nucleotides in the order of C, C, and A to the tRNA nucleotide-73, using CTP and ATP as substrates and producing inorganic pyrophosphate. tRNA 3'-terminal CCA addition is required both for tRNA processing and repair. Also involved in tRNA surveillance by mediating tandem CCA addition to generate a CCACCA at the 3' terminus of unstable tRNAs. While stable tRNAs receive only 3'-terminal CCA, unstable tRNAs are marked with CCACCA and rapidly degraded. This Photobacterium profundum (strain SS9) protein is Multifunctional CCA protein.